A 159-amino-acid chain; its full sequence is Protein-export protein SecB (159 aa).

It belongs to the SecB family. Homotetramer, a dimer of dimers. One homotetramer interacts with 1 SecA dimer.

Its subcellular location is the cytoplasm. In terms of biological role, one of the proteins required for the normal export of preproteins out of the cell cytoplasm. It is a molecular chaperone that binds to a subset of precursor proteins, maintaining them in a translocation-competent state. It also specifically binds to its receptor SecA. The sequence is that of Protein-export protein SecB from Burkholderia vietnamiensis (strain G4 / LMG 22486) (Burkholderia cepacia (strain R1808)).